The following is a 366-amino-acid chain: S-adenosylmethionine:tRNA ribosyltransferase-isomerase (366 aa).

The protein belongs to the QueA family. As to quaternary structure, monomer.

It is found in the cytoplasm. The catalysed reaction is 7-aminomethyl-7-carbaguanosine(34) in tRNA + S-adenosyl-L-methionine = epoxyqueuosine(34) in tRNA + adenine + L-methionine + 2 H(+). It participates in tRNA modification; tRNA-queuosine biosynthesis. Functionally, transfers and isomerizes the ribose moiety from AdoMet to the 7-aminomethyl group of 7-deazaguanine (preQ1-tRNA) to give epoxyqueuosine (oQ-tRNA). This is S-adenosylmethionine:tRNA ribosyltransferase-isomerase from Synechococcus sp. (strain CC9605).